Here is a 313-residue protein sequence, read N- to C-terminus: Ribonuclease HIII (313 aa).

A disordered region spans residues 62–88; sequence AERWTADAETPAPKKPASKKSIPSVYQ. The RNase H type-2 domain maps to 96 to 312; the sequence is MSVIGSDEVG…TQKAKRIASK (217 aa). The a divalent metal cation site is built by Asp-102, Glu-103, and Asp-207.

It belongs to the RNase HII family. RnhC subfamily. It depends on Mn(2+) as a cofactor. Mg(2+) is required as a cofactor.

The protein resides in the cytoplasm. It catalyses the reaction Endonucleolytic cleavage to 5'-phosphomonoester.. Its function is as follows. Endonuclease that specifically degrades the RNA of RNA-DNA hybrids. The polypeptide is Ribonuclease HIII (Bacillus licheniformis (strain ATCC 14580 / DSM 13 / JCM 2505 / CCUG 7422 / NBRC 12200 / NCIMB 9375 / NCTC 10341 / NRRL NRS-1264 / Gibson 46)).